Consider the following 1250-residue polypeptide: DNA-directed RNA polymerase subunit beta (1250 aa).

A disordered region spans residues 1215–1250 (QDLNDDDINPDDTIDAELDDNLFDDDFDDTFDDDDL).

The protein belongs to the RNA polymerase beta chain family. The RNAP catalytic core consists of 2 alpha, 1 beta, 1 beta' and 1 omega subunit. When a sigma factor is associated with the core the holoenzyme is formed, which can initiate transcription.

The enzyme catalyses RNA(n) + a ribonucleoside 5'-triphosphate = RNA(n+1) + diphosphate. DNA-dependent RNA polymerase catalyzes the transcription of DNA into RNA using the four ribonucleoside triphosphates as substrates. The polypeptide is DNA-directed RNA polymerase subunit beta (Acetivibrio thermocellus (strain ATCC 27405 / DSM 1237 / JCM 9322 / NBRC 103400 / NCIMB 10682 / NRRL B-4536 / VPI 7372) (Clostridium thermocellum)).